We begin with the raw amino-acid sequence, 365 residues long: tRNA N6-adenosine threonylcarbamoyltransferase (365 aa).

Fe cation contacts are provided by His-119 and His-123. Substrate is bound by residues 141–145 (LVSGG), Asp-174, and Gly-187. Residues 184 to 203 (QPGGPSVEGEARQGDPKRFR) form a disordered region. A compositionally biased stretch (basic and acidic residues) spans 192 to 201 (GEARQGDPKR). Residue Asn-289 coordinates substrate. Residue Asp-317 participates in Fe cation binding. A disordered region spans residues 342-365 (ARPRWPLDQSSPAMLGSGKKGAKA).

Belongs to the KAE1 / TsaD family. The cofactor is Fe(2+).

The protein resides in the cytoplasm. It carries out the reaction L-threonylcarbamoyladenylate + adenosine(37) in tRNA = N(6)-L-threonylcarbamoyladenosine(37) in tRNA + AMP + H(+). In terms of biological role, required for the formation of a threonylcarbamoyl group on adenosine at position 37 (t(6)A37) in tRNAs that read codons beginning with adenine. Is involved in the transfer of the threonylcarbamoyl moiety of threonylcarbamoyl-AMP (TC-AMP) to the N6 group of A37, together with TsaE and TsaB. TsaD likely plays a direct catalytic role in this reaction. The chain is tRNA N6-adenosine threonylcarbamoyltransferase from Ruegeria pomeroyi (strain ATCC 700808 / DSM 15171 / DSS-3) (Silicibacter pomeroyi).